Consider the following 986-residue polypeptide: Zinc finger protein 445 (986 aa).

Residues 52–134 (RQLFRQLRYH…ALLEELQRDL (83 aa)) form the SCAN box domain. Residues 219–289 (LTFQDVEVTF…NICTVQLKRD (71 aa)) form the KRAB domain. Glycyl lysine isopeptide (Lys-Gly) (interchain with G-Cter in SUMO2) cross-links involve residues lysine 302, lysine 360, and lysine 385. The interval 433–460 (QNTGLKENGKDRYGETSRKSWHAHPEHR) is disordered. The segment covering 439-460 (ENGKDRYGETSRKSWHAHPEHR) has biased composition (basic and acidic residues). C2H2-type zinc fingers lie at residues 470–492 (FQCRVCGKAFKWRSNRIRHEKIH) and 498–520 (YQCSLCEKAFQRLSSYRLHQKTH). Lysine 524 is covalently cross-linked (Glycyl lysine isopeptide (Lys-Gly) (interchain with G-Cter in SUMO2)). 2 consecutive C2H2-type zinc fingers follow at residues 553–575 (LHCNQCGKNFSCKSYAIEHQRIH) and 581–604 (YKCTRCRKTFRWKSNFSRHMKLHH). Residue lysine 609 forms a Glycyl lysine isopeptide (Lys-Gly) (interchain with G-Cter in SUMO2) linkage. 2 C2H2-type zinc fingers span residues 634-656 (FPCQNCGKTFTQKKSLIEHQRIH) and 662-686 (YQCSGCGETFTYRSSYIIHMKRTQH). Lysine 691 participates in a covalent cross-link: Glycyl lysine isopeptide (Lys-Gly) (interchain with G-Cter in SUMO2). 4 C2H2-type zinc fingers span residues 718 to 740 (NKCKYCGKAFHNRSFLLIHERVH), 746 to 768 (YQCRECEKAFRWSSNLYRHQRKH), 796 to 818 (FWCQECGKTFTRKRSLLDHKGIH), and 824 to 846 (FKCNLCEKSFDRNYRLVNHQRIH). Lysine 929 participates in a covalent cross-link: Glycyl lysine isopeptide (Lys-Gly) (interchain with G-Cter in SUMO2). C2H2-type zinc fingers lie at residues 933–955 (HKCSTCGKTFKKHSHLISHKRCH) and 961–983 (FKCIVCGKTFRWSSNLTRHMKNH).

This sequence belongs to the krueppel C2H2-type zinc-finger protein family.

It is found in the nucleus. Transcription regulator required to maintain maternal and paternal gene imprinting, a process by which gene expression is restricted in a parent of origin-specific manner by epigenetic modification of genomic DNA and chromatin, including DNA methylation. Acts by controlling DNA methylation during the earliest multicellular stages of development at multiple imprinting control regions (ICRs). Acts together with ZFP57, but ZFP57 plays the predominant role in imprinting maintenance. In contrast, ZNF445 seems to be the major factor in human early embryonic imprinting maintenance. The polypeptide is Zinc finger protein 445 (Znf445) (Mus musculus (Mouse)).